Here is a 393-residue protein sequence, read N- to C-terminus: S-adenosylmethionine synthase 2 (393 aa).

Glutamate 9 is a Mg(2+) binding site. Histidine 15 lines the ATP pocket. A K(+)-binding site is contributed by glutamate 43. L-methionine contacts are provided by glutamate 56 and glutamine 99. ATP contacts are provided by residues 167–169 (DGK), 235–238 (SGRF), aspartate 246, 252–253 (RK), alanine 269, lysine 273, and lysine 277. Position 246 (aspartate 246) interacts with L-methionine. Lysine 277 serves as a coordination point for L-methionine.

It belongs to the AdoMet synthase family. Homotetramer. The cofactor is Mn(2+). It depends on Mg(2+) as a cofactor. Co(2+) is required as a cofactor. K(+) serves as cofactor. Requires NH4(+) as cofactor. Mostly expressed in roots, and, to a lower extent, in hypocotyls and cotyledons.

Its subcellular location is the cytoplasm. The catalysed reaction is L-methionine + ATP + H2O = S-adenosyl-L-methionine + phosphate + diphosphate. It participates in amino-acid biosynthesis; S-adenosyl-L-methionine biosynthesis; S-adenosyl-L-methionine from L-methionine: step 1/1. Its activity is regulated as follows. Inhibited by products of SAMS reaction (SAM, Pi, PPi), substrate analogs (cycloleucine and ethionine), and alternative nucleotides (GTP, CTP and ADP). Strongly repressed by PPPi. Its function is as follows. Catalyzes the formation of S-adenosylmethionine from methionine and ATP. The reaction comprises two steps that are both catalyzed by the same enzyme: formation of S-adenosylmethionine (AdoMet) and triphosphate, and subsequent hydrolysis of the triphosphate. This chain is S-adenosylmethionine synthase 2 (SAMS2), found in Catharanthus roseus (Madagascar periwinkle).